We begin with the raw amino-acid sequence, 144 residues long: Transcription antitermination protein NusB (144 aa).

It belongs to the NusB family.

Involved in transcription antitermination. Required for transcription of ribosomal RNA (rRNA) genes. Binds specifically to the boxA antiterminator sequence of the ribosomal RNA (rrn) operons. This is Transcription antitermination protein NusB from Leifsonia xyli subsp. xyli (strain CTCB07).